We begin with the raw amino-acid sequence, 347 residues long: GMP reductase (347 aa).

Residue 108 to 131 (ADFQKTKDIMALTEDLIFICIDIA) participates in NADP(+) binding. Residues glycine 181 and glycine 183 each coordinate K(+). Catalysis depends on cysteine 186, which acts as the Thioimidate intermediate. Position 216-239 (216-239 (IIGDGGCSCAGDVSKAFGGGADFV)) interacts with NADP(+).

It belongs to the IMPDH/GMPR family. GuaC type 1 subfamily. As to quaternary structure, homotetramer.

It carries out the reaction IMP + NH4(+) + NADP(+) = GMP + NADPH + 2 H(+). Catalyzes the irreversible NADPH-dependent deamination of GMP to IMP. It functions in the conversion of nucleobase, nucleoside and nucleotide derivatives of G to A nucleotides, and in maintaining the intracellular balance of A and G nucleotides. The protein is GMP reductase of Photobacterium profundum (strain SS9).